The chain runs to 371 residues: Polygalacturonase (371 aa).

The N-terminal stretch at 1–19 (MPSYLRNLVWATLAAGLVS) is a signal peptide. Residues 20 to 34 (AAPTPSRVSDLTKKS) constitute a propeptide that is removed on maturation. Cysteine 38 and cysteine 53 are oxidised to a cystine. 7 PbH1 repeats span residues 95–117 (GPLIKISGSDITVEAADGAVINA), 165–195 (SDNLIIDGVTIDNSDGDENGGHNTDGFDISE), 196–217 (STGVTIRNAVVKNQDDCIAINS), 218–238 (GQNIYFTGGTCSGGHGLSIGS), 247–268 (VKNVTITDSTVTDSANGVRIKT), 276–298 (VSDVTFSDITVSGITDYGIVIEQ), and 310–355 (TSGV…DITS). Aspartate 210 serves as the catalytic Proton donor. The cysteines at positions 212 and 228 are disulfide-linked. Histidine 232 is an active-site residue. Residue asparagine 249 is glycosylated (N-linked (GlcNAc...) asparagine). Disulfide bonds link cysteine 338/cysteine 343 and cysteine 362/cysteine 371.

Belongs to the glycosyl hydrolase 28 family.

Its subcellular location is the secreted. It carries out the reaction (1,4-alpha-D-galacturonosyl)n+m + H2O = (1,4-alpha-D-galacturonosyl)n + (1,4-alpha-D-galacturonosyl)m.. The chain is Polygalacturonase from Penicillium janthinellum (Penicillium vitale).